Consider the following 73-residue polypeptide: Frenatin 3.1 (73 aa).

An N-terminal signal peptide occupies residues 1–22 (MHFLKKSIFLVLFLGLVSLSIC). The propeptide occupies 23–46 (EKEKREDQNEEEVDENEEASEEKR). Residues 25–45 (EKREDQNEEEVDENEEASEEK) are disordered. Residues 30–42 (QNEEEVDENEEAS) show a composition bias toward acidic residues.

As to expression, expressed by the skin glands.

Its subcellular location is the secreted. Its function is as follows. Antimicrobial peptide with activity against both Gram-positive and Gram-negative bacteria. This chain is Frenatin 3.1, found in Nyctimystes infrafrenatus (White-lipped tree frog).